Here is a 204-residue protein sequence, read N- to C-terminus: Thymidylate kinase (204 aa).

10 to 17 (GGDGAGKT) contributes to the ATP binding site.

The protein belongs to the thymidylate kinase family.

The enzyme catalyses dTMP + ATP = dTDP + ADP. Its function is as follows. Phosphorylation of dTMP to form dTDP in both de novo and salvage pathways of dTTP synthesis. The sequence is that of Thymidylate kinase from Cutibacterium acnes (strain DSM 16379 / KPA171202) (Propionibacterium acnes).